A 275-amino-acid polypeptide reads, in one-letter code: Large ribosomal subunit protein uL2cz (275 aa).

Disordered regions lie at residues 1–20 and 225–275; these read MAIH…AVDS and NPVD…RRSK.

This sequence belongs to the universal ribosomal protein uL2 family. As to quaternary structure, part of the 50S ribosomal subunit.

It localises to the plastid. The protein resides in the chloroplast. The protein is Large ribosomal subunit protein uL2cz (rpl2-A) of Populus alba (White poplar).